The chain runs to 215 residues: Cytochrome b6 (215 aa).

Residues 32 to 52 (IFYCLGGITLTCFIIQVATGF) form a helical membrane-spanning segment. Residue cysteine 35 participates in heme c binding. Heme b is bound by residues histidine 86 and histidine 100. 3 helical membrane-spanning segments follow: residues 90 to 110 (ASMM…TGGF), 116 to 136 (LTWV…VTGY), and 186 to 206 (LHTF…FLMI). The heme b site is built by histidine 187 and histidine 202.

The protein belongs to the cytochrome b family. PetB subfamily. As to quaternary structure, the 4 large subunits of the cytochrome b6-f complex are cytochrome b6, subunit IV (17 kDa polypeptide, PetD), cytochrome f and the Rieske protein, while the 4 small subunits are PetG, PetL, PetM and PetN. The complex functions as a dimer. Heme b is required as a cofactor. It depends on heme c as a cofactor.

It is found in the plastid. It localises to the chloroplast thylakoid membrane. In terms of biological role, component of the cytochrome b6-f complex, which mediates electron transfer between photosystem II (PSII) and photosystem I (PSI), cyclic electron flow around PSI, and state transitions. The protein is Cytochrome b6 of Zygnema circumcarinatum (Green alga).